The sequence spans 422 residues: Hispidin-3-hydroxylase (422 aa).

The helical transmembrane segment at 6–26 (NSLSVLIVGAGLGGLAAAIAL) threads the bilayer. The FAD site is built by Ala50, Arg108, and Asp318.

This sequence belongs to the paxM FAD-dependent monooxygenase family. In terms of assembly, monomer. Requires FAD as cofactor.

It localises to the membrane. It carries out the reaction hispidin + NADH + O2 + H(+) = 3-hydroxyhispidin + NAD(+) + H2O. The enzyme catalyses hispidin + NADPH + O2 + H(+) = 3-hydroxyhispidin + NADP(+) + H2O. It participates in secondary metabolite biosynthesis. Hispidin-3-hydroxylase; part of the gene cluster that mediates the fungal bioluminescence cycle. Hydroxylates hispidin in order to produce the fungal luciferin 3-hydroxyhispidin. The fungal bioluminescence cycle begins with the hispidin synthetase that catalyzes the formation of hispidin which is further hydroxylated by the hispidin-3-hydroxylase, yielding the fungal luciferin 3-hydroxyhispidin. The luciferase then produces an endoperoxide as a high-energy intermediate with decomposition that yields oxyluciferin (also known as caffeoylpyruvate) and light emission. Oxyluciferin can be recycled to caffeic acid by caffeoylpyruvate hydrolase. The polypeptide is Hispidin-3-hydroxylase (Neonothopanus nambi (Agaricus nambi)).